The chain runs to 382 residues: MSTYTRPVKLLLCGLLLLTLAIAVLNTLVPLWLAQASLPTWQVGMVSSSYFTGNLVGTLFTGYLIKRIGFNRSYYLASLIFAAGCVGLGVMVGFWSWMSWRFIAGIGCAMIWVVVESALMCSGTSHNRGRLLAAYMMVYYVGTFLGQLLVSKVSGELLHVLPWVTGMILAGILPLLFTRIVNQQTEARYSTSISAMLKLRQARLGVNGCIISGIVLGSLYGLMPLYLKHQGMANASIGFWMAVLVSAGILGQWPVGRLADKFGRLLVLRVQVFVVILGSIVMLTQAAMAPALFILGAAGFTLYPVAMAWACEKVEHHQLVAMNQALLLSYTVGSLLGPSFTAMLMQNYSDNLLFLMIASVSFIYLLMLLRNAGQTPNPVAHI.

The next 12 helical transmembrane spans lie at 14–34 (GLLL…LWLA), 45–65 (MVSS…GYLI), 75–95 (YLAS…VGFW), 102–122 (FIAG…LMCS), 131–151 (LLAA…LLVS), 157–177 (LLHV…PLLF), 204–224 (LGVN…GLMP), 235–255 (ASIG…QWPV), 265–284 (LLVL…VMLT), 289–311 (APAL…AWAC), 325–345 (ALLL…AMLM), and 349–369 (SDNL…LMLL).

It belongs to the major facilitator superfamily. YcaD (TC 2.A.1.26) family.

It is found in the cell inner membrane. This is an uncharacterized protein from Salmonella arizonae (strain ATCC BAA-731 / CDC346-86 / RSK2980).